The chain runs to 304 residues: Ribosomal RNA large subunit methyltransferase F (304 aa).

Belongs to the methyltransferase superfamily. METTL16/RlmF family.

The protein resides in the cytoplasm. It catalyses the reaction adenosine(1618) in 23S rRNA + S-adenosyl-L-methionine = N(6)-methyladenosine(1618) in 23S rRNA + S-adenosyl-L-homocysteine + H(+). In terms of biological role, specifically methylates the adenine in position 1618 of 23S rRNA. The polypeptide is Ribosomal RNA large subunit methyltransferase F (Klebsiella pneumoniae (strain 342)).